The chain runs to 465 residues: Ribulose bisphosphate carboxylase large chain (465 aa).

An N6,N6,N6-trimethyllysine modification is found at Lys4. Substrate is bound by residues Asn113 and Thr163. Lys165 (proton acceptor) is an active-site residue. Substrate is bound at residue Lys167. Residues Lys191, Asp193, and Glu194 each contribute to the Mg(2+) site. N6-carboxylysine is present on Lys191. Catalysis depends on His284, which acts as the Proton acceptor. Substrate-binding residues include Arg285, His317, and Ser369.

The protein belongs to the RuBisCO large chain family. Type I subfamily. In terms of assembly, heterohexadecamer of 8 large chains and 8 small chains; disulfide-linked. The disulfide link is formed within the large subunit homodimers. Mg(2+) serves as cofactor. The disulfide bond which can form in the large chain dimeric partners within the hexadecamer appears to be associated with oxidative stress and protein turnover.

It is found in the plastid. The protein localises to the chloroplast. It carries out the reaction 2 (2R)-3-phosphoglycerate + 2 H(+) = D-ribulose 1,5-bisphosphate + CO2 + H2O. It catalyses the reaction D-ribulose 1,5-bisphosphate + O2 = 2-phosphoglycolate + (2R)-3-phosphoglycerate + 2 H(+). Its function is as follows. RuBisCO catalyzes two reactions: the carboxylation of D-ribulose 1,5-bisphosphate, the primary event in carbon dioxide fixation, as well as the oxidative fragmentation of the pentose substrate in the photorespiration process. Both reactions occur simultaneously and in competition at the same active site. This chain is Ribulose bisphosphate carboxylase large chain, found in Bursera inaguensis (Elaphrium inaguense).